The chain runs to 363 residues: Type-1 angiotensin II receptor B (363 aa).

Over 1-27 (MLSNISAGENSEVEKIVVKCSKSGMHN) the chain is Extracellular. N-linked (GlcNAc...) asparagine glycosylation is present at Asn-4. Cystine bridges form between Cys-20-Cys-274 and Cys-103-Cys-182. Residues 28–57 (YIFITIPIIYSTIFVVGVFGNSLVVIVIYS) traverse the membrane as a helical segment. Over 58-63 (YMKMKT) the chain is Cytoplasmic. The helical transmembrane segment at 64 to 91 (MASVFLMNLALSDLCFVITLPLWAVYTA) threads the bilayer. At 92–100 (MHYHWPFGD) the chain is on the extracellular side. A helical transmembrane segment spans residues 101 to 127 (LLCKIASTAITLNLYTTVFLLTCLSID). Over 128-143 (RYSAIVHPMKSRIRRT) the chain is Cytoplasmic. A helical membrane pass occupies residues 144-167 (VMVARLTCVGIWLVAFLASLPSVI). The Extracellular segment spans residues 168–192 (YRQIFIFPDTNQTVCALVYHSGHIY). An angiotensin II-binding site is contributed by Arg-169. Residue Asn-178 is glycosylated (N-linked (GlcNAc...) asparagine). 2 residues coordinate angiotensin II: Tyr-186 and Lys-201. Residues 193–218 (FMVGMSLVKNIVGFFIPFVIILTSYT) form a helical membrane-spanning segment. Residues 219–239 (LIGKTLKEVYRAQRARNDDIF) are Cytoplasmic-facing. The chain crosses the membrane as a helical span at residues 240–268 (KMIVAVVLLFFFCWIPHQVFTFLDVLIQM). Residues 269-278 (DVIQNCKMYD) lie on the Extracellular side of the membrane. Residues 279–304 (IVDTGMPITICIAYFNSCLNPFLYGF) form a helical membrane-spanning segment. At 305 to 363 (FGKKFRKHFLQLIKYIPPKMRTHASVNTKSSTVSQRLSDTKCASNKIALWIFDIEEHCK) the chain is on the cytoplasmic side. S-palmitoyl cysteine attachment occurs at residues Cys-346 and Cys-362.

The protein belongs to the G-protein coupled receptor 1 family. Post-translationally, C-terminal Ser or Thr residues may be phosphorylated. In terms of tissue distribution, heart membranes, follicular oocytes.

The protein localises to the cell membrane. In terms of biological role, receptor for angiotensin II, a vasoconstricting peptide, which acts as a key regulator of blood pressure and sodium retention by the kidney. The activated receptor in turn couples to G-alpha proteins G(q) (GNAQ, GNA11, GNA14 or GNA15) and thus activates phospholipase C and increases the cytosolic Ca(2+) concentrations, which in turn triggers cellular responses such as stimulation of protein kinase C. In Xenopus laevis (African clawed frog), this protein is Type-1 angiotensin II receptor B (agtr1-b).